A 202-amino-acid chain; its full sequence is Guanylyl cyclase-activating protein 1 (202 aa).

A lipid anchor (N-myristoyl glycine) is attached at Gly2. Asn3 is subject to Deamidated asparagine. EF-hand domains lie at 31-49 (SGQL…KNLS), 51-86 (SASQ…VLKG), 87-122 (KVEQ…IRTI), and 131-166 (SAEE…DQML). Ca(2+)-binding residues include Asp64, Asn66, Asp68, Tyr70, Glu75, Asp100, Asp102, Asn104, Cys106, Glu111, Asp144, Asn146, Asp148, Glu150, and Glu155.

Homodimer. In the retina, expressed in rod photoreceptors (at protein level). Expressed in cone photoreceptors.

It localises to the membrane. It is found in the photoreceptor inner segment. The protein resides in the cell projection. The protein localises to the cilium. Its subcellular location is the photoreceptor outer segment. Stimulates retinal guanylyl cyclase when free calcium ions concentration is low and inhibits guanylyl cyclase when free calcium ions concentration is elevated. This Ca(2+)-sensitive regulation of retinal guanylyl cyclase is a key event in recovery of the dark state of rod photoreceptors following light exposure. May be involved in cone photoreceptor light response and recovery of response in bright light. The chain is Guanylyl cyclase-activating protein 1 (Guca1a) from Mus musculus (Mouse).